The sequence spans 4678 residues: E3 ubiquitin-protein ligase MYCBP2 (4678 aa).

Disordered regions lie at residues Asp-87–Ser-127, Ser-172–Pro-192, and Ala-609–Lys-628. The span at Ser-100 to Arg-124 shows a compositional bias: basic residues. Ser-127, Ser-178, Ser-181, and Ser-183 each carry phosphoserine. RCC1 repeat units lie at residues Asp-600 to Lys-655, Asn-699 to Pro-755, Lys-907 to Glu-957, Asn-958 to Met-1008, and Gly-1010 to Asp-1066. Positions Arg-898–Lys-910 are enriched in basic residues. The tract at residues Arg-898–Thr-928 is disordered. Residues His-911–Ser-924 show a composition bias toward basic and acidic residues. The PHR domain 1 stretch occupies residues Asn-1235–Leu-1386. Phosphoserine is present on Ser-1624. The PHR domain 2 stretch occupies residues Asn-1726–Arg-1884. Residues Cys-1748 and Cys-1863 are joined by a disulfide bond. Disordered regions lie at residues Phe-1993–Ser-2012 and Gln-2321–Ala-2340. The span at Asn-1994–Ser-2012 shows a compositional bias: polar residues. The interval Val-2022–Val-2550 is RAE1 binding. The Filamin repeat unit spans residues Ser-2341–Lys-2443. A Phosphothreonine modification is found at Thr-2683. 4 disordered regions span residues Leu-2709–Glu-2931, Thr-2943–Gly-2963, Glu-2979–Lys-3020, and Ala-3066–Leu-3085. Residues Asn-2718–Glu-2733 show a composition bias toward polar residues. Residues Leu-2742–Gly-2760 are compositionally biased toward basic and acidic residues. Ser-2769 carries the post-translational modification Phosphoserine. The span at Asp-2775 to Ser-2785 shows a compositional bias: basic and acidic residues. A compositionally biased stretch (polar residues) spans Arg-2786 to Ala-2810. A phosphoserine mark is found at Ser-2787, Ser-2789, Ser-2833, Ser-2839, Ser-2869, Ser-2871, and Ser-2920. Over residues Pro-2828 to Ser-2843 the composition is skewed to low complexity. Basic and acidic residues predominate over residues Thr-2860–Ser-2871. Ser-2985 bears the Phosphoserine mark. The segment covering Ile-2988–Lys-3001 has biased composition (basic residues). Ser-3090, Ser-3478, and Ser-3505 each carry phosphoserine. The disordered stretch occupies residues Pro-3605–Val-3631. Basic and acidic residues predominate over residues Asn-3616–Val-3631. The 179-residue stretch at Ser-3719–Glu-3897 folds into the DOC domain. The segment at Ser-3915–Glu-3934 is disordered. A Phosphothreonine modification is found at Thr-3921. Phosphoserine is present on residues Ser-3931 and Ser-3932. Cys-4428, Cys-4431, Cys-4446, His-4448, His-4451, Cys-4454, Cys-4475, Cys-4478, Cys-4544, and Cys-4547 together coordinate Zn(2+). Residues Cys-4428–Lys-4479 form an RING-type; atypical zinc finger. Residues Tyr-4539–His-4676 form a tandem cysteine domain region. Cys-4558 is a catalytic residue. Zn(2+) contacts are provided by Cys-4575, Cys-4578, Cys-4587, His-4590, Cys-4599, Cys-4602, and Cys-4603. Cys-4610 is an active-site residue. Residues Cys-4617, Cys-4620, Cys-4638, Cys-4652, His-4658, Cys-4669, and Cys-4672 each contribute to the Zn(2+) site.

This sequence belongs to the RING-Cys relay (RCR) family. As to quaternary structure, interacts with MYC. Interacts with TSC2 (tuberin) when TSC2 is in complex with TSC1 (hamartin). Interacts with FBXO45. Interacts with RAE1. Interacts with CPNE1 (via VWFA domain) and CPNE4 (via VWFA domain). Interacts with (sumoylated) RANGAP1; interaction with sumoylated RANGAP1 inhibits E3 ubiquitin-protein ligase activity and promotes MYCBP2 translocation to the nucleus. Interacts with RAN. Interacts with ATP13A2; the interaction inhibits the ubiquitination of TSC2 by MYCBP2. Interacts with USP11. In terms of processing, autoubiquitinated. Expressed in all tissues examined, expression is exceptionally abundant in brain and thymus. Colocalizes with TSC1 and TSC2 along the neurites and in the growth cones. Highly expressed in peripheral and central neurons. Colocalized with TSC1 in one of the filopodial extensions at the tip of a growth cone.

The protein localises to the nucleus. Its subcellular location is the cell projection. It is found in the axon. It localises to the cytoplasm. The protein resides in the cytoskeleton. The catalysed reaction is [E2 ubiquitin-conjugating enzyme]-S-ubiquitinyl-L-cysteine + [acceptor protein]-L-threonine = [E2 ubiquitin-conjugating enzyme]-L-cysteine + [acceptor protein]-3-O-ubiquitinyl-L-threonine.. The protein operates within protein modification; protein ubiquitination. Atypical E3 ubiquitin-protein ligase which specifically mediates ubiquitination of threonine and serine residues on target proteins, instead of ubiquitinating lysine residues. Shows esterification activity towards both threonine and serine, with a preference for threonine, and acts via two essential catalytic cysteine residues that relay ubiquitin to its substrate via thioester intermediates. Interacts with the E2 enzymes UBE2D1, UBE2D3, UBE2E1 and UBE2L3. Plays a key role in neural development, probably by mediating ubiquitination of threonine residues on target proteins. Involved in different processes such as regulation of neurite outgrowth, synaptic growth, synaptogenesis and axon degeneration. Required for the formation of major central nervous system axon tracts. Required for proper axon growth by regulating axon navigation and axon branching: acts by regulating the subcellular location and stability of MAP3K12/DLK. Required for proper localization of retinogeniculate projections but not for eye-specific segregation. Regulates axon guidance in the olfactory system. Involved in Wallerian axon degeneration, an evolutionarily conserved process that drives the loss of damaged axons: acts by promoting destabilization of NMNAT2, probably via ubiquitination of NMNAT2. Catalyzes ubiquitination of threonine and/or serine residues on NMNAT2, consequences of threonine and/or serine ubiquitination are however unknown. Regulates the internalization of TRPV1 in peripheral sensory neurons. Mediates ubiquitination and subsequent proteasomal degradation of TSC2/tuberin. Independently of the E3 ubiquitin-protein ligase activity, also acts as a guanosine exchange factor (GEF) for RAN in neurons of dorsal root ganglia. May function as a facilitator or regulator of transcriptional activation by MYC. Acts in concert with HUWE1 to regulate the circadian clock gene expression by promoting the lithium-induced ubiquination and degradation of NR1D1. This chain is E3 ubiquitin-protein ligase MYCBP2, found in Homo sapiens (Human).